A 434-amino-acid chain; its full sequence is Probable transcription factor HMS1 (434 aa).

In terms of domain architecture, bHLH spans 266–341; sequence TGRVSHNIIE…TKSIEYICHL (76 aa). Positions 365–434 are disordered; that stretch reads HLTEPSQPLS…DMDFNNAGDF (70 aa). Polar residues-rich tracts occupy residues 368 to 382 and 402 to 423; these read EPSQ…SEQV and PLHN…TNNS.

As to quaternary structure, interacts with the G1/S-specific cyclin PCL1. In terms of processing, phosphorylated by the cyclin-CDK complex PCL1-PHO85.

It is found in the nucleus. Its function is as follows. Involved in exit from mitosis and pseudohyphal differentiation. The polypeptide is Probable transcription factor HMS1 (HMS1) (Saccharomyces cerevisiae (strain ATCC 204508 / S288c) (Baker's yeast)).